We begin with the raw amino-acid sequence, 627 residues long: Neuronal acetylcholine receptor subunit alpha-4 (627 aa).

The N-terminal stretch at 1–26 (MELGGPGAPRLLPPLLLLLGTGLLRA) is a signal peptide. Over 27 to 249 (SSHVETRAHA…RRLPLFYTIN (223 aa)) the chain is Extracellular. A glycan (N-linked (GlcNAc...) asparagine) is linked at Asn-57. Ca(2+) contacts are provided by Val-76 and Glu-78. N-linked (GlcNAc...) asparagine glycans are attached at residues Asn-107 and Asn-174. 2 disulfides stabilise this stretch: Cys-161-Cys-175 and Cys-225-Cys-226. A helical transmembrane segment spans residues 250-269 (LIIPCLLISCLTVLVFYLPS). Cys-271 carries the S-palmitoyl cysteine lipid modification. 2 helical membrane-spanning segments follow: residues 275–291 (ITLC…FLLL) and 306–330 (IGEY…VLNV). Residues 331–600 (HHRSPRTHTM…WKYVAMVIDR (270 aa)) are Cytoplasmic-facing. 2 disordered regions span residues 382–481 (PRFW…VEGG) and 496–561 (DDAA…LPLS). Position 424 is a phosphoserine (Ser-424). Residues 501 to 511 (EADGQAAGALA) show a composition bias toward low complexity. Phosphoserine is present on residues Ser-538 and Ser-541. Positions 538-548 (SSVSPSATVKT) are enriched in polar residues. The chain crosses the membrane as a helical span at residues 601-619 (IFLWMFIIVCLLGTVGLFL).

Belongs to the ligand-gated ion channel (TC 1.A.9) family. Acetylcholine receptor (TC 1.A.9.1) subfamily. Alpha-4/CHRNA4 sub-subfamily. As to quaternary structure, neuronal AChR is composed of two different types of subunits: alpha and beta. CHRNA4 forms heteropentameric neuronal acetylcholine receptors with CHRNB2 and CHRNB4, as well as CHRNA5 and CHRNB3 as accesory subunits. Found in two major stoichiometric forms, LS (low agonist sensitivity): (CHRNA4)3:(CHRNB2)2 and HS (high agonist sensitivity): (CHRNA4)2:(CHRNB2)3, the two stoichiometric forms differ in their unitary conductance, calcium permeability, ACh sensitivity and potentiation by divalent cation. Cells produce predominantly an (CHRNA4)3:(CHRNB2)2 nAChR. The (CHRNA4)2:(CHRNB2)3 expression is selectively up-regulated by nicotine and has lower single channel conductance and calcium permeability. In the striatum, also forms CHRNA4:CHRNA6:CHRNB2 complexes. Also found in the stoichiometric form: (CHRNA4:CHRNB2)2:CHRNB3. Interacts with RIC3; which is required for proper folding and assembly. Interacts with LYPD6.

It localises to the synaptic cell membrane. The protein resides in the cell membrane. It catalyses the reaction Ca(2+)(in) = Ca(2+)(out). The catalysed reaction is K(+)(in) = K(+)(out). It carries out the reaction Na(+)(in) = Na(+)(out). Activated by a myriad of ligands such as acetylcholine, cytisine, nicotine, choline and epibatidine. Channel potentiation by calcium is stoichiometry-selective, CHRNA4:CHRNB2 nACh receptor is achieved by calcium association with topographically distinct sites framed by anionic residues within the CHRNA4 subunit and between the CHRNA4 and CHRNB2 subunits. nAChR activity is inhibited by the antagonist alpha-conotoxins BuIA, PnIA, GID and MII, small disulfide-constrained peptides from cone snails. Its function is as follows. Component of neuronal acetylcholine receptors (nAChRs) that function as pentameric, ligand-gated cation channels with high calcium permeability among other activities. nAChRs are excitatory neurotrasnmitter receptors formed by a collection of nAChR subunits known to mediate synaptic transmission in the nervous system and the neuromuscular junction. Each nAchR subunit confers differential attributes to channel properties, including activation, deactivation and desensitization kinetics, pH sensitivity, cation permeability, and binding to allosteric modulators. CHRNA4 forms heteropentameric neuronal acetylcholine receptors with CHRNB2 and CHRNB4, as well as CHRNA5 and CHRNB3 as accesory subunits. Is the most abundant nAChR subtype expressed in the central nervous system. Found in two major stoichiometric forms,(CHRNA4)3:(CHRNB2)2 and (CHRNA4)2:(CHRNB2)3, the two stoichiometric forms differ in their unitary conductance, calcium permeability, ACh sensitivity and potentiation by divalent cation. Involved in the modulation of calcium-dependent signaling pathways, influences the release of neurotransmitters, including dopamine, glutamate and GABA. The protein is Neuronal acetylcholine receptor subunit alpha-4 of Homo sapiens (Human).